A 102-amino-acid polypeptide reads, in one-letter code: Large ribosomal subunit protein bL21 (102 aa).

It belongs to the bacterial ribosomal protein bL21 family. As to quaternary structure, part of the 50S ribosomal subunit. Contacts protein L20.

Functionally, this protein binds to 23S rRNA in the presence of protein L20. In Leptospira biflexa serovar Patoc (strain Patoc 1 / Ames), this protein is Large ribosomal subunit protein bL21.